The following is a 313-amino-acid chain: Ribosomal RNA small subunit methyltransferase H (313 aa).

S-adenosyl-L-methionine-binding positions include 31–33 (GGH), Asp-51, Phe-77, Asp-95, and Gln-102.

It belongs to the methyltransferase superfamily. RsmH family.

It localises to the cytoplasm. The catalysed reaction is cytidine(1402) in 16S rRNA + S-adenosyl-L-methionine = N(4)-methylcytidine(1402) in 16S rRNA + S-adenosyl-L-homocysteine + H(+). Its function is as follows. Specifically methylates the N4 position of cytidine in position 1402 (C1402) of 16S rRNA. In Xylella fastidiosa (strain 9a5c), this protein is Ribosomal RNA small subunit methyltransferase H.